We begin with the raw amino-acid sequence, 299 residues long: Phosphatidylcholine-sterol acyltransferase (299 aa).

N-linked (GlcNAc...) asparagine glycosylation occurs at Asn-30. Ser-127 acts as the Nucleophile in catalysis. N-linked (GlcNAc...) asparagine glycosylation is present at Asn-185. Cys-226 and Cys-269 are disulfide-bonded. Residues Asp-258 and His-290 each act as charge relay system in the active site.

Belongs to the AB hydrolase superfamily. Lipase family.

The protein resides in the secreted. It carries out the reaction a sterol + a 1,2-diacyl-sn-glycero-3-phosphocholine = a sterol ester + a 1-acyl-sn-glycero-3-phosphocholine. Its activity is regulated as follows. APOA1 is the most potent activator in plasma. Also activated by APOE, APOC1 and APOA4. Its function is as follows. Central enzyme in the extracellular metabolism of plasma lipoproteins. Synthesized mainly in the liver and secreted into plasma where it converts cholesterol and phosphatidylcholines (lecithins) to cholesteryl esters and lysophosphatidylcholines on the surface of high and low density lipoproteins (HDLs and LDLs). The cholesterol ester is then transported back to the liver. Has a preference for plasma 16:0-18:2 or 18:O-18:2 phosphatidylcholines. Also produced in the brain by primary astrocytes, and esterifies free cholesterol on nascent APOE-containing lipoproteins secreted from glia and influences cerebral spinal fluid (CSF) APOE- and APOA1 levels. Together with APOE and the cholesterol transporter ABCA1, plays a key role in the maturation of glial-derived, nascent lipoproteins. Required for remodeling high-density lipoprotein particles into their spherical forms. The sequence is that of Phosphatidylcholine-sterol acyltransferase (LCAT) from Eliomys quercinus (Garden dormouse).